The sequence spans 2130 residues: Dedicator of cytokinesis protein 7 (2130 aa).

Residue Ser30 is modified to Phosphoserine. Residues 137–175 (GFNPNTLDKQKERQKGLPRQVFESDEAPDGSSYQDEQDD) are disordered. Residues Ser180 and Ser182 each carry the phosphoserine modification. Residues 365 to 395 (FKEADATKNKEKLEKLKSQADQFCQRLGKYR) are a coiled coil. Lys381 is modified (N6-methyllysine). A Phosphothreonine modification is found at Thr450. Ser452 is modified (phosphoserine). Positions 561 to 727 (RNLLYIYPQS…GVFNVEVVAV (167 aa)) constitute a C2 DOCK-type domain. Ser862, Ser864, Ser882, Ser888, Ser896, Ser900, and Ser905 each carry phosphoserine. A compositionally biased stretch (low complexity) spans 888–901 (SLNLNRSRSLSNSN). The disordered stretch occupies residues 888 to 966 (SLNLNRSRSL…SCNRMSSHTE (79 aa)). Phosphothreonine is present on residues Thr907 and Thr909. Ser910, Ser929, Ser963, Ser1382, Ser1420, Ser1422, Ser1424, and Ser1428 each carry phosphoserine. Positions 942 to 966 (SNPSPSAESTQAMDRSCNRMSSHTE) are enriched in polar residues. Residues 1668-2104 (KGYQTSPDLR…LQPLINRKIP (437 aa)) enclose the DOCKER domain. N6-acetyllysine is present on Lys1952. A coiled-coil region spans residues 2076 to 2102 (DQKEYQRELERNYHRLKEALQPLINRK). At Ser2119 the chain carries Phosphoserine.

Belongs to the DOCK family. In terms of assembly, component of the DOCK7-induced septin displacement/DISP complex, at least composed of DOCK7, LRCH3 and MYO6. Interacts with TSC1. Interacts with nucleotide-free RAC1 and RAC3. Interacts with TACC3. Interacts with CRY1. Interacts with NOD2.

Its subcellular location is the cell projection. The protein resides in the axon. Functionally, functions as a guanine nucleotide exchange factor (GEF), which activates Rac1 and Rac3 Rho small GTPases by exchanging bound GDP for free GTP. Does not have a GEF activity for CDC42. Required for STMN1 'Ser-15' phosphorylation during axon formation and consequently for neuronal polarization. As part of the DISP complex, may regulate the association of septins with actin and thereby regulate the actin cytoskeleton. Has a role in pigmentation. Involved in the regulation of cortical neurogenesis through the control of radial glial cells (RGCs) proliferation versus differentiation; negatively regulates the basal-to-apical interkinetic nuclear migration of RGCs by antagonizing the microtubule growth-promoting function of TACC3. The protein is Dedicator of cytokinesis protein 7 (Dock7) of Mus musculus (Mouse).